A 213-amino-acid chain; its full sequence is Ras-related protein Rab-4B (213 aa).

A2 carries the N-acetylalanine modification. GDP contacts are provided by G18, T19, G20, K21, S22, and C23. Residues G18, T19, G20, K21, S22, C23, S37, H39, and T40 each contribute to the GTP site. Position 22 (S22) interacts with Mg(2+). The Switch 1 motif lies at 39-44 (HTIGVE). 2 residues coordinate Mg(2+): T40 and D63. Residues 65–74 (AGQERFRSVT) carry the Switch 2 motif. Residue G66 coordinates GTP. A 5-glutamyl serotonin modification is found at Q67. 5 residues coordinate GDP: N121, K122, D124, A152, and L153. Positions 121, 122, 124, 152, and 153 each coordinate GTP. A phosphoserine mark is found at S185 and S193. S-geranylgeranyl cysteine attachment occurs at residues C211 and C213. C213 is modified (cysteine methyl ester).

This sequence belongs to the small GTPase superfamily. Rab family. In terms of assembly, interacts (GTP-bound form) with RUFY1; the interaction allows endosomal tethering and fusion. Requires Mg(2+) as cofactor. In terms of processing, serotonylation of Gln-67 by TGM2 during activation and aggregation of platelets leads to constitutive activation of GTPase activity.

The protein resides in the cell membrane. Its subcellular location is the early endosome membrane. The enzyme catalyses GTP + H2O = GDP + phosphate + H(+). Regulated by guanine nucleotide exchange factors (GEFs) which promote the exchange of bound GDP for free GTP. Regulated by GTPase activating proteins (GAPs) which increase the GTP hydrolysis activity. Inhibited by GDP dissociation inhibitors (GDIs). Its function is as follows. The small GTPases Rab are key regulators of intracellular membrane trafficking, from the formation of transport vesicles to their fusion with membranes. Rabs cycle between an inactive GDP-bound form and an active GTP-bound form that is able to recruit to membranes different set of downstream effectors directly responsible for vesicle formation, movement, tethering and fusion. RAB4B mediates endosomal tethering and fusion through the interaction with RUFY1 and RAB14. Acts as a regulator of platelet alpha-granule release during activation and aggregation of platelets. The protein is Ras-related protein Rab-4B of Mus musculus (Mouse).